A 393-amino-acid chain; its full sequence is Pre-mRNA splicing factor SR-like 1 (393 aa).

The segment at 173 to 393 (MNLPTKPSGS…VIKLGGSSWR (221 aa)) is disordered. Positions 249-312 (QSRDYYSDRD…RNDYEDDRSR (64 aa)) are enriched in basic and acidic residues. The Nuclear localization signal signature appears at 301 to 308 (SRRNDYED). Over residues 313-325 (HDRRSRSRSRSRS) the composition is skewed to basic residues. Basic and acidic residues-rich tracts occupy residues 329 to 346 (QIEREPTPKRDSSNKEKS) and 356 to 385 (KLKDLYGDASSQKRDEGFGTRKDSSSEEVI).

Belongs to the PRP38 family. In terms of processing, phosphorylated. In terms of tissue distribution, mostly expressed in siliques and leaves, also present in seedlings, flowers and stems, and, at low levels, in roots.

The protein resides in the nucleus. Its function is as follows. May be required for pre-mRNA splicing. Confers salt tolerance to LiCl and NaCl. This is Pre-mRNA splicing factor SR-like 1 from Arabidopsis thaliana (Mouse-ear cress).